Here is a 140-residue protein sequence, read N- to C-terminus: Sex-regulated protein janus-B (140 aa).

Arg42 is a binding site for substrate. The active-site Proton acceptor is the His69. Substrate is bound at residue 110 to 112; sequence SRT.

This sequence belongs to the janus family.

JanA and janB regulate somatic sex differentiation. This chain is Sex-regulated protein janus-B (janB), found in Drosophila orena (Fruit fly).